The primary structure comprises 98 residues: Putative septation protein SpoVG (98 aa).

The protein belongs to the SpoVG family.

In terms of biological role, essential for sporulation. Interferes with or is a negative regulator of the pathway leading to asymmetric septation. This chain is Putative septation protein SpoVG, found in Bacillus pumilus (strain SAFR-032).